The chain runs to 82 residues: DNA-directed RNA polymerase subunit Rpo5 (82 aa).

This sequence belongs to the archaeal Rpo5/eukaryotic RPB5 RNA polymerase subunit family. Part of the RNA polymerase complex.

The protein resides in the cytoplasm. It catalyses the reaction RNA(n) + a ribonucleoside 5'-triphosphate = RNA(n+1) + diphosphate. DNA-dependent RNA polymerase (RNAP) catalyzes the transcription of DNA into RNA using the four ribonucleoside triphosphates as substrates. The chain is DNA-directed RNA polymerase subunit Rpo5 from Thermococcus kodakarensis (strain ATCC BAA-918 / JCM 12380 / KOD1) (Pyrococcus kodakaraensis (strain KOD1)).